Reading from the N-terminus, the 71-residue chain is Plasticin-C1 (71 aa).

A signal peptide spans 1–22 (MAFLKKSLLLVLFLGLVSLSIC). A propeptide spanning residues 23–45 (EEEKRENEDEEKQEDDDQSENKR) is cleaved from the precursor. The tract at residues 25–46 (EKRENEDEEKQEDDDQSENKRG) is disordered. Residues 30–40 (EDEEKQEDDDQ) show a composition bias toward acidic residues. At asparagine 68 the chain carries Asparagine amide. A propeptide spanning residues 70–71 (ES) is cleaved from the precursor.

It belongs to the frog skin active peptide (FSAP) family. Plasticin subfamily. Expressed by the skin glands.

It is found in the secreted. Its subcellular location is the target cell membrane. Its function is as follows. Neutral peptide with no antimicrobial activity. May act in synergy with cationic peptides by enhancing their activity. Has a moderate hemolytic activity. The polypeptide is Plasticin-C1 (Agalychnis callidryas (Red-eyed tree frog)).